The sequence spans 522 residues: Probable protein kinase UbiB (522 aa).

Residues 119-496 (SFDADPVASA…QRRTNRLLLT (378 aa)) form the Protein kinase domain. Residues 125-133 (VASASIAQV) and Lys-147 contribute to the ATP site. Residue Asp-282 is the Proton acceptor of the active site. A helical transmembrane segment spans residues 494–514 (LLTVFYLIGGFVAGGLFAHWI).

The protein belongs to the ABC1 family. UbiB subfamily.

It localises to the cell inner membrane. It functions in the pathway cofactor biosynthesis; ubiquinone biosynthesis [regulation]. Functionally, is probably a protein kinase regulator of UbiI activity which is involved in aerobic coenzyme Q (ubiquinone) biosynthesis. This is Probable protein kinase UbiB from Leptothrix cholodnii (strain ATCC 51168 / LMG 8142 / SP-6) (Leptothrix discophora (strain SP-6)).